The following is a 268-amino-acid chain: Inositol polyphosphate multikinase (268 aa).

Residues K27, 86–88, and D99 each bind ATP; that span reads ENI. 127-135 contacts substrate; sequence TSGSLGFRI. D235 contributes to the ATP binding site.

This sequence belongs to the inositol phosphokinase (IPK) family.

The protein resides in the cytoplasm. It is found in the nucleus. It carries out the reaction 1D-myo-inositol 1,4,5-trisphosphate + 2 ATP = 1D-myo-inositol 1,3,4,5,6-pentakisphosphate + 2 ADP + 2 H(+). The enzyme catalyses 1D-myo-inositol 1,4,5-trisphosphate + ATP = 1D-myo-inositol 1,4,5,6-tetrakisphosphate + ADP + H(+). It catalyses the reaction 1D-myo-inositol 1,4,5-trisphosphate + ATP = 1D-myo-inositol 1,3,4,5-tetrakisphosphate + ADP + H(+). The catalysed reaction is 1D-myo-inositol 1,4,5,6-tetrakisphosphate + ATP = 1D-myo-inositol 1,3,4,5,6-pentakisphosphate + ADP + H(+). Inositol phosphate kinase with both monophosphoinositol and diphosphoinositol polyphosphate synthase activities. Able to phosphorylate inositol 1,4,5-trisphosphate (Ins(1,4,5)P3) on both the carbon-3 and carbon-6 positions to synthesize inositol 1,3,4,5-tetrakisphosphate (Ins(1,3,4,5)P4) and inositol 1,4,5,6-tetrakisphosphate (Ins(1,4,5,6)P4), and then to subsequently phosphorylate and convert either isomer of InsP4 to inositol 1,3,4,5,6-pentakisphosphate (Ins(1,3,4,5,6)P5). Also converts (Ins(1,3,4,5,6)P5) to InsP6. Also has a role in transcription regulation. The catalytic activity is required for PHO gene repression by phosphate and for NCR gene activation in response to nitrogen availability, indicating a role for inositol pyrophosphates in these controls. Inositol polyphosphates may be involved in the regulation of chromatin remodeling of transcription. The polypeptide is Inositol polyphosphate multikinase (arg82) (Schizosaccharomyces pombe (strain 972 / ATCC 24843) (Fission yeast)).